We begin with the raw amino-acid sequence, 439 residues long: Acyl-lipid (8-3)-desaturase (439 aa).

A Cytochrome b5 heme-binding domain is found at 7–88 (GRSAAREMTA…LPKLDASKVE (82 aa)). 2 residues coordinate heme: His40 and His66. The chain crosses the membrane as a helical span at residues 123-143 (IPHMIYRVVEIVALFALSFWL). The Histidine box-1 motif lies at 171–175 (HEMGH). The Histidine box-2 signature appears at 208–213 (HSKHHA). Transmembrane regions (helical) follow at residues 254 to 274 (AYLF…LYLH), 287 to 307 (FVWI…LGYS), and 312 to 332 (VGMY…QFAV). A Histidine box-3 motif is present at residues 376–380 (QIEHH).

The protein belongs to the fatty acid desaturase type 1 family. The cofactor is Fe(2+).

The protein localises to the membrane. The enzyme catalyses an (8Z,11Z,14Z)-icosatrienoyl-containing glycerolipid + 2 Fe(II)-[cytochrome b5] + O2 + 2 H(+) = (5Z,8Z,11Z,14Z)-eicosatetraenoyl-containing glycerolipid + 2 Fe(III)-[cytochrome b5] + 2 H2O. It carries out the reaction an (8Z,11Z,14Z,17Z)-eicosatetraenoyl-containing glycerolipid + 2 Fe(II)-[cytochrome b5] + O2 + 2 H(+) = a (5Z,8Z,11Z,14Z,17Z)-eicosapentaenoyl-containing glycerolipid + 2 Fe(III)-[cytochrome b5] + 2 H2O. Fatty acid desaturase that introduces a cis double bond at the 5-position in 20-carbon polyunsaturated fatty acids incorporated in a glycerolipid that contain a Delta(8) double bond. This chain is Acyl-lipid (8-3)-desaturase, found in Thraustochytrium sp.